The following is a 246-amino-acid chain: Dolichol-phosphate mannosyltransferase subunit 1 (246 aa).

GDP-alpha-D-mannose is bound by residues Pro20, Tyr22, Glu24, Val49, Asp51, Asp104, Ala105, Asp106, Arg133, Arg220, and Lys226. Asp106 is a Mg(2+) binding site. Asp106 contacts Mn(2+).

It belongs to the glycosyltransferase 2 family. As to quaternary structure, component of the dolichol-phosphate mannose (DPM) synthase complex composed of DPMS1, DPMS2 and DPMS3; in the complex interacts directly with DPMS3. Requires Mg(2+) as cofactor. Mn(2+) is required as a cofactor. It depends on Ca(2+) as a cofactor.

It localises to the endoplasmic reticulum membrane. It catalyses the reaction a di-trans,poly-cis-dolichyl phosphate + GDP-alpha-D-mannose = a di-trans,poly-cis-dolichyl beta-D-mannosyl phosphate + GDP. The protein operates within protein modification; protein glycosylation. In terms of biological role, transfers mannose from GDP-mannose to dolichol monophosphate to form dolichol phosphate mannose (Dol-P-Man) which is the mannosyl donor in pathways leading to N-glycosylation, glycosyl phosphatidylinositol membrane anchoring, and O-mannosylation of proteins; catalytic subunit of the dolichol-phosphate mannose (DPM) synthase complex. Plays a role in plant development and physiology, sensitivity to ammonium stress and endoplasmic reticulum stress response. The protein is Dolichol-phosphate mannosyltransferase subunit 1 of Arabidopsis thaliana (Mouse-ear cress).